A 429-amino-acid chain; its full sequence is GTPase Obg (429 aa).

Positions 1–158 constitute an Obg domain; sequence MFADSAKIFI…LNVTLELKVI (158 aa). The OBG-type G domain maps to 159–333; it reads ADVGLVGFPN…LLYYVSDLLK (175 aa). GTP contacts are provided by residues 165-172, 190-194, 212-215, 282-285, and 314-316; these read GFPNVGKS, FTTLN, DIPG, NKTD, and SAV. Mg(2+) is bound by residues Ser-172 and Thr-192. An OCT domain is found at 350-429; the sequence is ENLVMSEPYT…MYGLEFDYYK (80 aa).

The protein belongs to the TRAFAC class OBG-HflX-like GTPase superfamily. OBG GTPase family. As to quaternary structure, monomer. Mg(2+) serves as cofactor.

The protein resides in the cytoplasm. Its function is as follows. An essential GTPase which binds GTP, GDP and possibly (p)ppGpp with moderate affinity, with high nucleotide exchange rates and a fairly low GTP hydrolysis rate. Plays a role in control of the cell cycle, stress response, ribosome biogenesis and in those bacteria that undergo differentiation, in morphogenesis control. The chain is GTPase Obg from Lachnoclostridium phytofermentans (strain ATCC 700394 / DSM 18823 / ISDg) (Clostridium phytofermentans).